The primary structure comprises 468 residues: ATP synthase subunit beta (468 aa).

155-162 (GGAGVGKT) serves as a coordination point for ATP.

Belongs to the ATPase alpha/beta chains family. In terms of assembly, F-type ATPases have 2 components, CF(1) - the catalytic core - and CF(0) - the membrane proton channel. CF(1) has five subunits: alpha(3), beta(3), gamma(1), delta(1), epsilon(1). CF(0) has three main subunits: a(1), b(2) and c(9-12). The alpha and beta chains form an alternating ring which encloses part of the gamma chain. CF(1) is attached to CF(0) by a central stalk formed by the gamma and epsilon chains, while a peripheral stalk is formed by the delta and b chains.

It is found in the cell membrane. It carries out the reaction ATP + H2O + 4 H(+)(in) = ADP + phosphate + 5 H(+)(out). Its function is as follows. Produces ATP from ADP in the presence of a proton gradient across the membrane. The catalytic sites are hosted primarily by the beta subunits. In Bacillus cereus (strain ATCC 10987 / NRS 248), this protein is ATP synthase subunit beta.